We begin with the raw amino-acid sequence, 308 residues long: Elongation factor Ts (308 aa).

The involved in Mg(2+) ion dislocation from EF-Tu stretch occupies residues 80-83 (TDFV).

It belongs to the EF-Ts family.

It is found in the cytoplasm. Associates with the EF-Tu.GDP complex and induces the exchange of GDP to GTP. It remains bound to the aminoacyl-tRNA.EF-Tu.GTP complex up to the GTP hydrolysis stage on the ribosome. This Rhizobium rhizogenes (strain K84 / ATCC BAA-868) (Agrobacterium radiobacter) protein is Elongation factor Ts.